The following is a 137-amino-acid chain: Peptide methionine sulfoxide reductase MsrB (137 aa).

Positions Pro-7–Glu-129 constitute a MsrB domain. Zn(2+) contacts are provided by Cys-46, Cys-49, Cys-95, and Cys-98. Cys-118 serves as the catalytic Nucleophile.

This sequence belongs to the MsrB Met sulfoxide reductase family. Zn(2+) is required as a cofactor.

The catalysed reaction is L-methionyl-[protein] + [thioredoxin]-disulfide + H2O = L-methionyl-(R)-S-oxide-[protein] + [thioredoxin]-dithiol. In Klebsiella pneumoniae (strain 342), this protein is Peptide methionine sulfoxide reductase MsrB.